The following is a 241-amino-acid chain: Triosephosphate isomerase (241 aa).

A substrate-binding site is contributed by 9 to 11 (NWK). His96 (electrophile) is an active-site residue. Residue Glu165 is the Proton acceptor of the active site. Substrate is bound by residues Gly171, Ser204, and 225–226 (GG).

The protein belongs to the triosephosphate isomerase family. In terms of assembly, homodimer.

The protein resides in the cytoplasm. The catalysed reaction is D-glyceraldehyde 3-phosphate = dihydroxyacetone phosphate. Its pathway is carbohydrate biosynthesis; gluconeogenesis. The protein operates within carbohydrate degradation; glycolysis; D-glyceraldehyde 3-phosphate from glycerone phosphate: step 1/1. Its function is as follows. Involved in the gluconeogenesis. Catalyzes stereospecifically the conversion of dihydroxyacetone phosphate (DHAP) to D-glyceraldehyde-3-phosphate (G3P). This chain is Triosephosphate isomerase, found in Trichormus variabilis (strain ATCC 29413 / PCC 7937) (Anabaena variabilis).